Reading from the N-terminus, the 270-residue chain is 3-methyl-2-oxobutanoate hydroxymethyltransferase (270 aa).

Mg(2+)-binding residues include D43 and D82. Residues D43–S44, D82, and K112 contribute to the 3-methyl-2-oxobutanoate site. Position 114 (E114) interacts with Mg(2+). Residue E179 is the Proton acceptor of the active site.

The protein belongs to the PanB family. In terms of assembly, homodecamer; pentamer of dimers. The cofactor is Mg(2+).

Its subcellular location is the cytoplasm. It carries out the reaction 3-methyl-2-oxobutanoate + (6R)-5,10-methylene-5,6,7,8-tetrahydrofolate + H2O = 2-dehydropantoate + (6S)-5,6,7,8-tetrahydrofolate. Its pathway is cofactor biosynthesis; (R)-pantothenate biosynthesis; (R)-pantoate from 3-methyl-2-oxobutanoate: step 1/2. In terms of biological role, catalyzes the reversible reaction in which hydroxymethyl group from 5,10-methylenetetrahydrofolate is transferred onto alpha-ketoisovalerate to form ketopantoate. This Staphylococcus saprophyticus subsp. saprophyticus (strain ATCC 15305 / DSM 20229 / NCIMB 8711 / NCTC 7292 / S-41) protein is 3-methyl-2-oxobutanoate hydroxymethyltransferase.